The primary structure comprises 500 residues: Cytochrome P450 11B2, mitochondrial (500 aa).

The N-terminal 24 residues, 1-24, are a transit peptide targeting the mitochondrion; sequence MALRVTADVWLARPWQCLHRTRAL. Phe381 lines the 21-hydroxyprogesterone pocket. Cys447 contributes to the heme binding site.

This sequence belongs to the cytochrome P450 family. Heme is required as a cofactor.

The protein resides in the mitochondrion inner membrane. It carries out the reaction a steroid + 2 reduced [adrenodoxin] + O2 + 2 H(+) = an 11beta-hydroxysteroid + 2 oxidized [adrenodoxin] + H2O. The catalysed reaction is 21-hydroxyprogesterone + 2 reduced [adrenodoxin] + O2 + 2 H(+) = corticosterone + 2 oxidized [adrenodoxin] + H2O. The enzyme catalyses corticosterone + 2 reduced [adrenodoxin] + O2 + 2 H(+) = 18-hydroxycorticosterone + 2 oxidized [adrenodoxin] + H2O. It catalyses the reaction 18-hydroxycorticosterone + 2 reduced [adrenodoxin] + O2 + 2 H(+) = aldosterone + 2 oxidized [adrenodoxin] + 2 H2O. It carries out the reaction 11-deoxycortisol + 2 reduced [adrenodoxin] + O2 + 2 H(+) = cortisol + 2 oxidized [adrenodoxin] + H2O. The catalysed reaction is 21-hydroxyprogesterone + 2 reduced [adrenodoxin] + O2 + 2 H(+) = 18-hydroxy-11-deoxycorticosterone + 2 oxidized [adrenodoxin] + H2O. The enzyme catalyses cortisol + 2 reduced [adrenodoxin] + O2 + 2 H(+) = 18-hydroxycortisol + 2 oxidized [adrenodoxin] + H2O. It catalyses the reaction 18-hydroxycortisol + 2 reduced [adrenodoxin] + O2 + 2 H(+) = 18-oxocortisol + 2 oxidized [adrenodoxin] + 2 H2O. Its pathway is steroid biosynthesis. Functionally, a cytochrome P450 monooxygenase that catalyzes the biosynthesis of aldosterone, the main mineralocorticoid in the human body responsible for salt and water homeostasis, thus involved in blood pressure regulation, arterial hypertension, and the development of heart failure. Catalyzes three sequential oxidative reactions of 11-deoxycorticosterone (21-hydroxyprogesterone), namely 11-beta hydroxylation, followed by two successive oxidations at C18 yielding 18-hydroxy and then 18-oxo intermediates (that would not leave the enzyme active site during the consecutive hydroxylation reactions), ending with the formation of aldosterone. Can also produce 18-hydroxycortisol and 18-oxocortisol, derived from successive oxidations of cortisol at C18, normally found at very low levels, but significantly increased in primary aldosteronism, the most common form of secondary hypertension. Mechanistically, uses molecular oxygen inserting one oxygen atom into a substrate and reducing the second into a water molecule. Two electrons are provided by NADPH via a two-protein mitochondrial transfer system comprising flavoprotein FDXR (adrenodoxin/ferredoxin reductase) and nonheme iron-sulfur protein FDX1 or FDX2 (adrenodoxin/ferredoxin). Could also be involved in the androgen metabolic pathway. The chain is Cytochrome P450 11B2, mitochondrial (Cyp11b2) from Mus musculus (Mouse).